A 40-amino-acid chain; its full sequence is Entry-fusion complex protein OPG076 (40 aa).

Residues 2-22 (LVVIMFFIAFAFCSWLSYSYL) traverse the membrane as a helical segment. Residues 23-40 (RPYISTKELNKSRMFYIT) lie on the Virion surface side of the membrane.

This sequence belongs to the orthopoxvirus OPG076 family. In terms of assembly, component of the entry fusion complex (EFC) composed of OPG053, OPG076, OPG086, OPG094, OPG095, OPG099, OPG107, OPG143, OPG104, OPG147 and OPG155. Except for OPG095 and OPG053, each of the EFC proteins is required for assembly or stability of the complex. Unglycosylated because produced in viral factories instead of the classic ER -Golgi route.

Its subcellular location is the virion membrane. Component of the entry fusion complex (EFC), which consists of 11 proteins. During cell infection, this complex mediates entry of the virion core into the host cytoplasm by a two-step mechanism consisting of lipid mixing of the viral and cellular membranes and subsequent pore formation. This is Entry-fusion complex protein OPG076 (OPG076) from Variola virus (isolate Human/India/Ind3/1967) (VARV).